The sequence spans 266 residues: 3',5'-cyclic-nucleotide phosphodiesterase alr5338 (266 aa).

Fe cation-binding residues include D14, H16, D56, N86, H155, H194, and H196. AMP contacts are provided by residues H16, D56, and 86 to 87 (NH). H196 provides a ligand contact to AMP.

This sequence belongs to the cyclic nucleotide phosphodiesterase class-III family. The cofactor is Fe(2+). Requires Mn(2+) as cofactor.

The enzyme catalyses a nucleoside 3',5'-cyclic phosphate + H2O = a nucleoside 5'-phosphate + H(+). It carries out the reaction 3',5'-cyclic AMP + H2O = AMP + H(+). It catalyses the reaction 3',5'-cyclic GMP + H2O = GMP + H(+). Its activity is regulated as follows. Activated by iron and manganese. Its function is as follows. Hydrolyzes cAMP to 5'-AMP. Plays an important regulatory role in modulating the intracellular concentration of cAMP, thereby influencing cAMP-dependent processes. Can also hydrolyze cGMP. In Nostoc sp. (strain PCC 7120 / SAG 25.82 / UTEX 2576), this protein is 3',5'-cyclic-nucleotide phosphodiesterase alr5338.